The following is a 304-amino-acid chain: Fluoroacetate dehalogenase (304 aa).

An AB hydrolase-1 domain is found at 26-151 (PALLLLHGFP…FVARAYWHWY (126 aa)). Catalysis depends on Asp104, which acts as the Nucleophile. Arg105, Arg108, His149, Trp150, and Tyr212 together coordinate fluoroacetate. His271 functions as the Proton acceptor in the catalytic mechanism.

Belongs to the AB hydrolase superfamily. Epoxide hydrolase family. Homodimer.

The catalysed reaction is a haloacetate + H2O = a halide anion + glycolate + H(+). The enzyme catalyses fluoroacetate + H2O = fluoride + glycolate + H(+). Functionally, catalyzes the hydrolytic defluorination of fluoroacetate to produce glycolate. Has only very low activity towards chloroacetate and bromoacetate. The polypeptide is Fluoroacetate dehalogenase (fac-dex) (Burkholderia sp).